Reading from the N-terminus, the 212-residue chain is MMNTPFDPTNALVPMVVEQTAKGERSYDIYSRLLKENVIFMVGQVEDHMANLIVAQMLFLEAENPEKDIFLYINSPGGSVTAGMAIYDTMNFIKPDVSTVCIGQAASMGAFLLSGGAKGKRYCLPNARVMIHQPLGGFQGQASDFEIHAKEILSIKEKMNRLMAAHTGQDYDKVARDTDRDNFLSAQESVDYGLVDQVLANRPDASNSDAKK.

Residue Ser-107 is the Nucleophile of the active site. The active site involves His-132.

It belongs to the peptidase S14 family. Fourteen ClpP subunits assemble into 2 heptameric rings which stack back to back to give a disk-like structure with a central cavity, resembling the structure of eukaryotic proteasomes.

The protein localises to the cytoplasm. It catalyses the reaction Hydrolysis of proteins to small peptides in the presence of ATP and magnesium. alpha-casein is the usual test substrate. In the absence of ATP, only oligopeptides shorter than five residues are hydrolyzed (such as succinyl-Leu-Tyr-|-NHMec, and Leu-Tyr-Leu-|-Tyr-Trp, in which cleavage of the -Tyr-|-Leu- and -Tyr-|-Trp bonds also occurs).. Its function is as follows. Cleaves peptides in various proteins in a process that requires ATP hydrolysis. Has a chymotrypsin-like activity. Plays a major role in the degradation of misfolded proteins. This Pseudoalteromonas atlantica (strain T6c / ATCC BAA-1087) protein is ATP-dependent Clp protease proteolytic subunit.